The primary structure comprises 128 residues: Small ribosomal subunit protein uS9 (128 aa).

As to quaternary structure, part of the 30S ribosomal subunit. Contacts proteins S7 and S10.

Part of the top of the head of the 30S subunit. The C-terminal region penetrates the head emerging in the P-site where it contacts tRNA. The polypeptide is Small ribosomal subunit protein uS9 (rpsI) (Thermus thermophilus (strain ATCC 27634 / DSM 579 / HB8)).